We begin with the raw amino-acid sequence, 330 residues long: RNA/RNP complex-1-interacting phosphatase (330 aa).

The segment covering M1–G12 has biased composition (basic residues). Residues M1 to P32 are disordered. One can recognise a Tyrosine-protein phosphatase domain in the interval F61 to W208. Residue C152 is the Phosphocysteine intermediate of the active site. T153–R158 contributes to the substrate binding site. Residue R158 is the Proton donor/acceptor of the active site.

The protein belongs to the protein-tyrosine phosphatase family. Non-receptor class dual specificity subfamily. Monomer. May interact with SFRS7 and SFRS9/SRP30C.

The protein resides in the nucleus. It localises to the nucleus speckle. Functionally, possesses RNA 5'-triphosphatase and diphosphatase activities, but displays a poor protein-tyrosine phosphatase activity. In addition, has phosphatase activity with ATP, ADP and O-methylfluorescein phosphate (in vitro). Binds to RNA. May participate in nuclear mRNA metabolism. The chain is RNA/RNP complex-1-interacting phosphatase from Homo sapiens (Human).